A 543-amino-acid polypeptide reads, in one-letter code: Cysteine/serine-rich nuclear protein 2 (543 aa).

Residue M1 is modified to N-acetylmethionine. Disordered regions lie at residues 1–51, 281–305, and 488–543; these read MDAF…SFTP, KRQVSRPAAPDEEPSPTASCSLTGA, and DCNP…PLAV. The segment covering 31-40 has biased composition (low complexity); it reads SSDSADSCDS. Polar residues-rich tracts occupy residues 42–51 and 296–305; these read NPPTTASFTP and PTASCSLTGA.

It belongs to the AXUD1 family.

It is found in the nucleus. Binds to the consensus sequence 5'-AGAGTG-3' and has transcriptional activator activity. May play a role in apoptosis. In Homo sapiens (Human), this protein is Cysteine/serine-rich nuclear protein 2 (CSRNP2).